Reading from the N-terminus, the 335-residue chain is Biotin synthase (335 aa).

In terms of domain architecture, Radical SAM core spans 46-274 (YNIQLASLFS…KSKIRLSAGR (229 aa)). [4Fe-4S] cluster is bound by residues C61, C65, and C68. [2Fe-2S] cluster contacts are provided by C105, C137, C197, and R269.

The protein belongs to the radical SAM superfamily. Biotin synthase family. In terms of assembly, homodimer. Requires [4Fe-4S] cluster as cofactor. [2Fe-2S] cluster is required as a cofactor.

It carries out the reaction (4R,5S)-dethiobiotin + (sulfur carrier)-SH + 2 reduced [2Fe-2S]-[ferredoxin] + 2 S-adenosyl-L-methionine = (sulfur carrier)-H + biotin + 2 5'-deoxyadenosine + 2 L-methionine + 2 oxidized [2Fe-2S]-[ferredoxin]. The protein operates within cofactor biosynthesis; biotin biosynthesis; biotin from 7,8-diaminononanoate: step 2/2. Functionally, catalyzes the conversion of dethiobiotin (DTB) to biotin by the insertion of a sulfur atom into dethiobiotin via a radical-based mechanism. In Prochlorococcus marinus (strain MIT 9312), this protein is Biotin synthase.